A 246-amino-acid chain; its full sequence is DNA polymerase sliding clamp (246 aa).

It belongs to the PCNA family. As to quaternary structure, homotrimer. The subunits circularize to form a toroid; DNA passes through its center. Replication factor C (RFC) is required to load the toroid on the DNA.

Functionally, sliding clamp subunit that acts as a moving platform for DNA processing. Responsible for tethering the catalytic subunit of DNA polymerase and other proteins to DNA during high-speed replication. In Methanocella arvoryzae (strain DSM 22066 / NBRC 105507 / MRE50), this protein is DNA polymerase sliding clamp.